The following is a 21-amino-acid chain: Glutathione S-transferase 1 (21 aa).

Belongs to the GST superfamily. Phi family.

The catalysed reaction is RX + glutathione = an S-substituted glutathione + a halide anion + H(+). Functionally, conjugation of reduced glutathione to a wide number of exogenous and endogenous hydrophobic electrophiles. In plants, may have a detoxification role against certain herbicides. This chain is Glutathione S-transferase 1, found in Populus euphratica (Euphrates poplar).